A 212-amino-acid chain; its full sequence is Pyrrolidone-carboxylate peptidase (212 aa).

Catalysis depends on residues E80, C143, and H165.

Belongs to the peptidase C15 family. In terms of assembly, homotetramer.

Its subcellular location is the cytoplasm. The enzyme catalyses Release of an N-terminal pyroglutamyl group from a polypeptide, the second amino acid generally not being Pro.. Functionally, removes 5-oxoproline from various penultimate amino acid residues except L-proline. The protein is Pyrrolidone-carboxylate peptidase of Vibrio campbellii (strain ATCC BAA-1116).